We begin with the raw amino-acid sequence, 443 residues long: 3-phosphoshikimate 1-carboxyvinyltransferase (443 aa).

Positions 24, 25, and 29 each coordinate 3-phosphoshikimate. Position 24 (lysine 24) interacts with phosphoenolpyruvate. Phosphoenolpyruvate-binding residues include glycine 96 and arginine 124. Residues serine 168, glutamine 170, aspartate 316, and lysine 343 each contribute to the 3-phosphoshikimate site. Glutamine 170 lines the phosphoenolpyruvate pocket. The Proton acceptor role is filled by aspartate 316. 2 residues coordinate phosphoenolpyruvate: arginine 347 and arginine 391.

This sequence belongs to the EPSP synthase family. Monomer.

It localises to the cytoplasm. The catalysed reaction is 3-phosphoshikimate + phosphoenolpyruvate = 5-O-(1-carboxyvinyl)-3-phosphoshikimate + phosphate. The protein operates within metabolic intermediate biosynthesis; chorismate biosynthesis; chorismate from D-erythrose 4-phosphate and phosphoenolpyruvate: step 6/7. Functionally, catalyzes the transfer of the enolpyruvyl moiety of phosphoenolpyruvate (PEP) to the 5-hydroxyl of shikimate-3-phosphate (S3P) to produce enolpyruvyl shikimate-3-phosphate and inorganic phosphate. This is 3-phosphoshikimate 1-carboxyvinyltransferase from Dichelobacter nodosus (Bacteroides nodosus).